Here is a 342-residue protein sequence, read N- to C-terminus: MELNSSSRVDSEFRYTLFPIVYSIIFVLGIIANGYVLWVFARLYPSKKLNEIKIFMVNLTVADLLFLITLPLWIVYYSNQGNWFLPKFLCNLAGCLFFINTYCSVAFLGVITYNRFQAVKYPIKTAQATTRKRGIALSLVIWVAIVAAASYFLVMDSTNVVSNKAGSGNITRCFEHYEKGSKPVLIIHICIVLGFFIVFLLILFCNLVIIHTLLRQPVKQQRNAEVRRRALWMVCTVLAVFVICFVPHHMVQLPWTLAELGMWPSSNHQAINDAHQVTLCLLSTNCVLDPVIYCFLTKKFRKHLSEKLNIMRSSQKCSRVTTDTGTEMAIPINHTPVNPIKN.

At 1-16 the chain is on the extracellular side; the sequence is MELNSSSRVDSEFRYT. Residue N4 is glycosylated (N-linked (GlcNAc...) asparagine). The chain crosses the membrane as a helical span at residues 17-38; that stretch reads LFPIVYSIIFVLGIIANGYVLW. Residues 39-54 lie on the Cytoplasmic side of the membrane; sequence VFARLYPSKKLNEIKI. A helical transmembrane segment spans residues 55–74; that stretch reads FMVNLTVADLLFLITLPLWI. Topologically, residues 75-91 are extracellular; it reads VYYSNQGNWFLPKFLCN. A disulfide bridge links C90 with C173. A helical transmembrane segment spans residues 92-113; sequence LAGCLFFINTYCSVAFLGVITY. Residues 114-133 are Cytoplasmic-facing; it reads NRFQAVKYPIKTAQATTRKR. Residues 134–155 traverse the membrane as a helical segment; sequence GIALSLVIWVAIVAAASYFLVM. The Extracellular segment spans residues 156–184; that stretch reads DSTNVVSNKAGSGNITRCFEHYEKGSKPV. Residue N169 is glycosylated (N-linked (GlcNAc...) asparagine). A helical membrane pass occupies residues 185 to 205; that stretch reads LIIHICIVLGFFIVFLLILFC. Residues 206 to 233 are Cytoplasmic-facing; sequence NLVIIHTLLRQPVKQQRNAEVRRRALWM. A helical membrane pass occupies residues 234 to 254; sequence VCTVLAVFVICFVPHHMVQLP. Residues 255-276 lie on the Extracellular side of the membrane; sequence WTLAELGMWPSSNHQAINDAHQ. A helical membrane pass occupies residues 277-296; that stretch reads VTLCLLSTNCVLDPVIYCFL. At 297-342 the chain is on the cytoplasmic side; the sequence is TKKFRKHLSEKLNIMRSSQKCSRVTTDTGTEMAIPINHTPVNPIKN.

This sequence belongs to the G-protein coupled receptor 1 family. Interacts with ARRB1.

The protein localises to the cell membrane. Its function is as follows. Receptor for platelet activating factor, a chemotactic phospholipid mediator that possesses potent inflammatory, smooth-muscle contractile and hypotensive activity. Seems to mediate its action via a G protein that activates a phosphatidylinositol-calcium second messenger system. The protein is Platelet-activating factor receptor (PTAFR) of Cavia porcellus (Guinea pig).